Consider the following 411-residue polypeptide: Multifunctional CCA protein (411 aa).

Residues Gly8 and Arg11 each contribute to the ATP site. 2 residues coordinate CTP: Gly8 and Arg11. Residues Asp21 and Asp23 each contribute to the Mg(2+) site. ATP-binding residues include Arg91, Arg137, and Arg140. The CTP site is built by Arg91, Arg137, and Arg140. In terms of domain architecture, HD spans 228–333 (SGVHTLLVIE…LKVFNALDIW (106 aa)).

It belongs to the tRNA nucleotidyltransferase/poly(A) polymerase family. Bacterial CCA-adding enzyme type 1 subfamily. As to quaternary structure, monomer. Can also form homodimers and oligomers. Requires Mg(2+) as cofactor. Ni(2+) serves as cofactor.

The enzyme catalyses a tRNA precursor + 2 CTP + ATP = a tRNA with a 3' CCA end + 3 diphosphate. It carries out the reaction a tRNA with a 3' CCA end + 2 CTP + ATP = a tRNA with a 3' CCACCA end + 3 diphosphate. Its function is as follows. Catalyzes the addition and repair of the essential 3'-terminal CCA sequence in tRNAs without using a nucleic acid template. Adds these three nucleotides in the order of C, C, and A to the tRNA nucleotide-73, using CTP and ATP as substrates and producing inorganic pyrophosphate. tRNA 3'-terminal CCA addition is required both for tRNA processing and repair. Also involved in tRNA surveillance by mediating tandem CCA addition to generate a CCACCA at the 3' terminus of unstable tRNAs. While stable tRNAs receive only 3'-terminal CCA, unstable tRNAs are marked with CCACCA and rapidly degraded. In Actinobacillus pleuropneumoniae serotype 5b (strain L20), this protein is Multifunctional CCA protein.